We begin with the raw amino-acid sequence, 73 residues long: Small ribosomal subunit protein bS18 (73 aa).

The protein belongs to the bacterial ribosomal protein bS18 family. Part of the 30S ribosomal subunit. Forms a tight heterodimer with protein bS6.

Its function is as follows. Binds as a heterodimer with protein bS6 to the central domain of the 16S rRNA, where it helps stabilize the platform of the 30S subunit. The sequence is that of Small ribosomal subunit protein bS18 from Prochlorococcus marinus (strain MIT 9313).